The chain runs to 713 residues: Probable arginine--tRNA ligase, cytoplasmic (713 aa).

The interval 74-113 (KNKKNGVKATSTSSPSSSTSAPAEKKAKKDGKTGGAPPKQ) is disordered. A compositionally biased stretch (low complexity) spans 81 to 95 (KATSTSSPSSSTSAP). Over residues 96–105 (AEKKAKKDGK) the composition is skewed to basic and acidic residues. L-arginine contacts are provided by residues 252–254 (SPN), histidine 263, tyrosine 438, aspartate 442, and glutamine 466. A 'HIGH' region motif is present at residues 252–263 (SPNIAKEMHVGH). Positions 583–597 (NTAVYLLYAYTRIQS) are interaction with tRNA.

The protein belongs to the class-I aminoacyl-tRNA synthetase family.

The protein resides in the cytoplasm. Its subcellular location is the cytosol. It carries out the reaction tRNA(Arg) + L-arginine + ATP = L-arginyl-tRNA(Arg) + AMP + diphosphate. Forms part of a macromolecular complex that catalyzes the attachment of specific amino acids to cognate tRNAs during protein synthesis. The chain is Probable arginine--tRNA ligase, cytoplasmic from Caenorhabditis elegans.